The sequence spans 449 residues: Amidophosphoribosyltransferase (449 aa).

The propeptide occupies 1 to 9 (MRGEIMKEK). Residue cysteine 10 is the Nucleophile of the active site. Residues 10–224 (CGIFGAYSQD…PGEVIVVKDG (215 aa)) enclose the Glutamine amidotransferase type-2 domain. Cysteine 239 is a binding site for [4Fe-4S] cluster. 3 residues coordinate Mg(2+): serine 286, aspartate 346, and aspartate 347. Positions 383, 432, and 435 each coordinate [4Fe-4S] cluster.

It in the C-terminal section; belongs to the purine/pyrimidine phosphoribosyltransferase family. It depends on Mg(2+) as a cofactor. [4Fe-4S] cluster is required as a cofactor.

The catalysed reaction is 5-phospho-beta-D-ribosylamine + L-glutamate + diphosphate = 5-phospho-alpha-D-ribose 1-diphosphate + L-glutamine + H2O. Its pathway is purine metabolism; IMP biosynthesis via de novo pathway; N(1)-(5-phospho-D-ribosyl)glycinamide from 5-phospho-alpha-D-ribose 1-diphosphate: step 1/2. Its function is as follows. Catalyzes the formation of phosphoribosylamine from phosphoribosylpyrophosphate (PRPP) and glutamine. This Pyrococcus horikoshii (strain ATCC 700860 / DSM 12428 / JCM 9974 / NBRC 100139 / OT-3) protein is Amidophosphoribosyltransferase.